The primary structure comprises 300 residues: Ornithine carbamoyltransferase (300 aa).

Carbamoyl phosphate-binding positions include Ser49–Thr52, Gln76, Arg100, and His127–Gln130. Residues Asn158, Asp218, and Ser222–Met223 each bind L-ornithine. Carbamoyl phosphate-binding positions include Cys258–Leu259 and Arg286.

This sequence belongs to the aspartate/ornithine carbamoyltransferase superfamily. OTCase family.

It localises to the cytoplasm. It carries out the reaction carbamoyl phosphate + L-ornithine = L-citrulline + phosphate + H(+). It participates in amino-acid biosynthesis; L-arginine biosynthesis; L-arginine from L-ornithine and carbamoyl phosphate: step 1/3. In terms of biological role, reversibly catalyzes the transfer of the carbamoyl group from carbamoyl phosphate (CP) to the N(epsilon) atom of ornithine (ORN) to produce L-citrulline. This chain is Ornithine carbamoyltransferase, found in Oleidesulfovibrio alaskensis (strain ATCC BAA-1058 / DSM 17464 / G20) (Desulfovibrio alaskensis).